Consider the following 455-residue polypeptide: Chromosomal replication initiator protein DnaA (455 aa).

Residues 1–74 are domain I, interacts with DnaA modulators; that stretch reads MSEQEIWEKV…LYEAIGHEIA (74 aa). Residues 74–116 are domain II; the sequence is APVFYTEEELKSLHTSEQKEENQPEQPAKKYTPGVDEAVIGGE. Basic and acidic residues predominate over residues 85–95; the sequence is SLHTSEQKEEN. The segment at 85 to 104 is disordered; the sequence is SLHTSEQKEENQPEQPAKKY. The interval 117 to 333 is domain III, AAA+ region; that stretch reads QFNTHNTFET…GALTRVLAFS (217 aa). The ATP site is built by Gly161, Gly163, Lys164, and Thr165. Residues 334-455 form a domain IV, binds dsDNA region; it reads KLQGQPITTE…ENLEKEIRNQ (122 aa).

It belongs to the DnaA family. As to quaternary structure, oligomerizes as a right-handed, spiral filament on DNA at oriC.

It localises to the cytoplasm. Its function is as follows. Plays an essential role in the initiation and regulation of chromosomal replication. ATP-DnaA binds to the origin of replication (oriC) to initiate formation of the DNA replication initiation complex once per cell cycle. Binds the DnaA box (a 9 base pair repeat at the origin) and separates the double-stranded (ds)DNA. Forms a right-handed helical filament on oriC DNA; dsDNA binds to the exterior of the filament while single-stranded (ss)DNA is stabiized in the filament's interior. The ATP-DnaA-oriC complex binds and stabilizes one strand of the AT-rich DNA unwinding element (DUE), permitting loading of DNA polymerase. After initiation quickly degrades to an ADP-DnaA complex that is not apt for DNA replication. Binds acidic phospholipids. The chain is Chromosomal replication initiator protein DnaA from Staphylococcus saprophyticus subsp. saprophyticus (strain ATCC 15305 / DSM 20229 / NCIMB 8711 / NCTC 7292 / S-41).